A 228-amino-acid chain; its full sequence is Protein GlxC (228 aa).

This sequence belongs to the FwdC/FmdC family.

The chain is Protein GlxC (glxC) from Rhizobium meliloti (strain 1021) (Ensifer meliloti).